The following is a 556-amino-acid chain: Glutamine--tRNA ligase (556 aa).

The 'HIGH' region motif lies at P35–H45. ATP is bound by residues E36–N38 and H42–S48. D68 and Y213 together coordinate L-glutamine. ATP-binding positions include T232 and R262–L263. The 'KMSKS' region signature appears at V269–R273.

This sequence belongs to the class-I aminoacyl-tRNA synthetase family. As to quaternary structure, monomer.

It is found in the cytoplasm. The enzyme catalyses tRNA(Gln) + L-glutamine + ATP = L-glutaminyl-tRNA(Gln) + AMP + diphosphate. The protein is Glutamine--tRNA ligase of Pseudomonas aeruginosa (strain ATCC 15692 / DSM 22644 / CIP 104116 / JCM 14847 / LMG 12228 / 1C / PRS 101 / PAO1).